The primary structure comprises 347 residues: Gamma-glutamyl hydrolase B (347 aa).

An N-terminal signal peptide occupies residues 1–22 (MIKLFSLFIYLYLISNLKLINT). The region spanning 23 to 314 (INNTPVIGIL…THVEQIYIFN (292 aa)) is the Gamma-glutamyl hydrolase domain. C128 acts as the Nucleophile in catalysis. Residues N152, N158, and N201 are each glycosylated (N-linked (GlcNAc...) asparagine). The Proton donor role is filled by H240. Residues N273, N314, and N318 are each glycosylated (N-linked (GlcNAc...) asparagine).

Belongs to the peptidase C26 family.

Its subcellular location is the secreted. It is found in the extracellular space. It catalyses the reaction (6S)-5,6,7,8-tetrahydrofolyl-(gamma-L-Glu)(n) + (n-1) H2O = (6S)-5,6,7,8-tetrahydrofolate + (n-1) L-glutamate. This chain is Gamma-glutamyl hydrolase B (gghB), found in Dictyostelium discoideum (Social amoeba).